The following is a 331-amino-acid chain: Hydroxyacylglutathione hydrolase 1, mitochondrial (331 aa).

The transit peptide at 1-76 (MPVISKASST…HFCSISNMPS (76 aa)) directs the protein to the mitochondrion. Residues His131 and His133 each contribute to the Zn(2+) site. 2 residues coordinate Fe cation: Asp135 and His136. Zn(2+) is bound by residues His189 and Asp208. Position 208 (Asp208) interacts with Fe cation. 246-248 (REN) contacts substrate.

The protein belongs to the metallo-beta-lactamase superfamily. Glyoxalase II family. The cofactor is Fe(2+). Fe(3+) is required as a cofactor. It depends on Zn(2+) as a cofactor. In terms of tissue distribution, mainly expressed in roots, flowers and flower buds. Also detected in leaves.

It is found in the mitochondrion. It carries out the reaction an S-(2-hydroxyacyl)glutathione + H2O = a 2-hydroxy carboxylate + glutathione + H(+). It functions in the pathway secondary metabolite metabolism; methylglyoxal degradation; (R)-lactate from methylglyoxal: step 2/2. Thiolesterase that catalyzes the hydrolysis of S-D-lactoyl-glutathione to form glutathione and D-lactic acid. This Arabidopsis thaliana (Mouse-ear cress) protein is Hydroxyacylglutathione hydrolase 1, mitochondrial (GLX2-1).